Reading from the N-terminus, the 500-residue chain is Glutelin type-B 5 (500 aa).

The N-terminal stretch at 1-24 (MATIAFSRLSIYFCVLLLCHGSMA) is a signal peptide. 2 disulfides stabilise this stretch: C45-C78 and C121-C310. 2 Cupin type-1 domains span residues 50 to 245 (LQAF…LVAK) and 316 to 465 (LNIE…EQAR).

This sequence belongs to the 11S seed storage protein (globulins) family. Hexamer; each subunit is composed of an acidic and a basic chain derived from a single precursor and linked by a disulfide bond.

In terms of biological role, seed storage protein. This Oryza sativa subsp. japonica (Rice) protein is Glutelin type-B 5 (GLUB5).